The sequence spans 298 residues: 4-diphosphocytidyl-2-C-methyl-D-erythritol kinase (298 aa).

The active site involves lysine 25. An ATP-binding site is contributed by 109-119 (PVGGGFGGGSS). The active site involves aspartate 151.

Belongs to the GHMP kinase family. IspE subfamily.

It catalyses the reaction 4-CDP-2-C-methyl-D-erythritol + ATP = 4-CDP-2-C-methyl-D-erythritol 2-phosphate + ADP + H(+). The protein operates within isoprenoid biosynthesis; isopentenyl diphosphate biosynthesis via DXP pathway; isopentenyl diphosphate from 1-deoxy-D-xylulose 5-phosphate: step 3/6. Functionally, catalyzes the phosphorylation of the position 2 hydroxy group of 4-diphosphocytidyl-2C-methyl-D-erythritol. The chain is 4-diphosphocytidyl-2-C-methyl-D-erythritol kinase from Xylella fastidiosa (strain 9a5c).